We begin with the raw amino-acid sequence, 246 residues long: MTTIAQSVFCFLAGFFNFFLLYFRKTSRAYCKYQVVKYHSNIPMSPLTTHRLLTVKRKILVLDLDETLIHSHHDGVLRQTVKPGTPSDFTIRVVIDRHPVKFSVHERPHVDYFLSVVSQWYELVVFTASMEVYGTSVADRLDRGRGILKRRYFRQHCTMEVGGYTKDLSAIHPDLSSICILDNSPGAYRKFPHNAIPIPSWFSDPNDTCLLNLLPFLDALRFTSDVRSVLSRNMQALPETQSVQYY.

The helical transmembrane segment at 3–23 threads the bilayer; sequence TIAQSVFCFLAGFFNFFLLYF. Residues 53–220 enclose the FCP1 homology domain; that stretch reads LTVKRKILVL…LNLLPFLDAL (168 aa).

Belongs to the dullard family.

It localises to the membrane. It is found in the nucleus envelope. The catalysed reaction is O-phospho-L-seryl-[protein] + H2O = L-seryl-[protein] + phosphate. It catalyses the reaction O-phospho-L-threonyl-[protein] + H2O = L-threonyl-[protein] + phosphate. In terms of biological role, serine/threonine protein phosphatase that may dephosphorylate and activate lipin-like phosphatases. Lipins are phosphatidate phosphatases that catalyze the conversion of phosphatidic acid to diacylglycerol and control the metabolism of fatty acids at different levels. May indirectly modulate the lipid composition of nuclear and/or endoplasmic reticulum membranes and be required for proper nuclear membrane morphology and/or dynamics. Contributes to closure of nuclear envelope (NE) holes and prevents excess nuclear membranes after meiosis and mitosis, possibly through spatial regulation of lipin. May limit the production of endoplasmic reticulum (ER) sheets proximal to the NE to prevent the ER membranes that feed into NE openings from invading the nuclear interior and thereby restrict nuclear transport to nuclear pore complexes (NPCs). May also indirectly regulate the production of lipid droplets and triacylglycerol. The polypeptide is CTD nuclear envelope phosphatase 1 homolog (cnep-1) (Caenorhabditis elegans).